Here is a 384-residue protein sequence, read N- to C-terminus: Secreted LysM effector LysM14 (384 aa).

The N-terminal stretch at 1-35 is a signal peptide; that stretch reads MGWSPRWKVMLRGIFNAMISIHILLSLLFAHIATA. Residues 64 to 112 enclose the LysM domain; sequence YTYTIQEGDTCAKLAQRYQVTTSNIETWNVGSWGWPGCAKIKQGDFVCL. The segment at 185 to 220 is disordered; sequence STTKSAASKTTTTSNPTTTSKTTITSKPTTTSKPTT.

It belongs to the secreted LysM effector family.

It is found in the secreted. Functionally, secreted LysM effector that might have a role in sequestration of chitin oligosaccharides (breakdown products of fungal cell walls that are released during invasion and act as triggers of host immunity) to dampen host defense. The protein is Secreted LysM effector LysM14 of Penicillium expansum (Blue mold rot fungus).